The chain runs to 464 residues: Histidine--tRNA ligase (464 aa).

The protein belongs to the class-II aminoacyl-tRNA synthetase family. Homodimer.

The protein resides in the cytoplasm. The enzyme catalyses tRNA(His) + L-histidine + ATP = L-histidyl-tRNA(His) + AMP + diphosphate + H(+). The sequence is that of Histidine--tRNA ligase from Stenotrophomonas maltophilia (strain K279a).